A 394-amino-acid chain; its full sequence is F-box/kelch-repeat protein At1g23390 (394 aa).

An F-box domain is found at glutamate 15–proline 62. Kelch repeat units lie at residues phenylalanine 65–histidine 111, serine 155–serine 204, alanine 206–phenylalanine 252, and methionine 321–alanine 369.

The chain is F-box/kelch-repeat protein At1g23390 from Arabidopsis thaliana (Mouse-ear cress).